We begin with the raw amino-acid sequence, 532 residues long: uncharacterized protein (532 aa).

5 helical membrane passes run 11-31 (YLSH…ALII), 51-71 (IEPF…KIFF), 126-146 (LIDI…YTLW), 147-167 (ILYN…IIVF), and 231-253 (YVES…VLLI). Positions 315-531 (ICINKLVYEY…MIIPMNNGII (217 aa)) constitute an ABC transporter domain. Position 349-356 (349-356 (GKSGSGKS)) interacts with ATP.

The protein localises to the membrane. This is an uncharacterized protein from Acanthamoeba polyphaga mimivirus (APMV).